Here is a 132-residue protein sequence, read N- to C-terminus: MKRTALLHAELSQVIAALGHGDMLVIGDAGLPIPDGPRRIDLALTPGIPRVADVLKVVLSEMQVERALIAREAIGQLPVGQLPAWCEGQLAALPETVSHEELKRLSARAKAVIRTGECTPYANIVLYAGVTF.

Residue histidine 20 is the Proton donor of the active site. Substrate is bound by residues aspartate 28, histidine 99, and 121-123; that span reads YAN.

It belongs to the RbsD / FucU family. RbsD subfamily. As to quaternary structure, homodecamer.

The protein localises to the cytoplasm. The catalysed reaction is beta-D-ribopyranose = beta-D-ribofuranose. The protein operates within carbohydrate metabolism; D-ribose degradation; D-ribose 5-phosphate from beta-D-ribopyranose: step 1/2. Functionally, catalyzes the interconversion of beta-pyran and beta-furan forms of D-ribose. The polypeptide is D-ribose pyranase (Variovorax paradoxus (strain S110)).